We begin with the raw amino-acid sequence, 184 residues long: NADH-quinone oxidoreductase subunit B (184 aa).

[4Fe-4S] cluster contacts are provided by C37, C38, C103, and C132.

The protein belongs to the complex I 20 kDa subunit family. In terms of assembly, NDH-1 is composed of 14 different subunits. Subunits NuoB, C, D, E, F, and G constitute the peripheral sector of the complex. [4Fe-4S] cluster serves as cofactor.

It is found in the cell membrane. The catalysed reaction is a quinone + NADH + 5 H(+)(in) = a quinol + NAD(+) + 4 H(+)(out). In terms of biological role, NDH-1 shuttles electrons from NADH, via FMN and iron-sulfur (Fe-S) centers, to quinones in the respiratory chain. The immediate electron acceptor for the enzyme in this species is believed to be a menaquinone. Couples the redox reaction to proton translocation (for every two electrons transferred, four hydrogen ions are translocated across the cytoplasmic membrane), and thus conserves the redox energy in a proton gradient. The protein is NADH-quinone oxidoreductase subunit B of Mycolicibacterium vanbaalenii (strain DSM 7251 / JCM 13017 / BCRC 16820 / KCTC 9966 / NRRL B-24157 / PYR-1) (Mycobacterium vanbaalenii).